The primary structure comprises 427 residues: Dorsalin-1 (427 aa).

The first 20 residues, 1 to 20 (MHYFGVLAALSVFNIIACLT), serve as a signal peptide directing secretion. Positions 21-318 (RGKPLENWKK…PRQHSSRSKR (298 aa)) are excised as a propeptide. Asparagine 71, asparagine 136, asparagine 265, and asparagine 292 each carry an N-linked (GlcNAc...) asparagine glycan. The interval 288–321 (KLGKNDSSSEEEQREEKAIARPRQHSSRSKRSIG) is disordered. Positions 307 to 321 (ARPRQHSSRSKRSIG) are enriched in basic residues. Disulfide bonds link cysteine 325–cysteine 391, cysteine 354–cysteine 424, and cysteine 358–cysteine 426.

This sequence belongs to the TGF-beta family. Homodimer; disulfide-linked. In terms of tissue distribution, expressed selectively in the dorsal neural tube. Lower levels seen in kidney and myotomal cells.

Its subcellular location is the secreted. In terms of biological role, appears to regulate cell differentiation within the neural tube. May regulate the differentiation of cell types along the dorsoventral axis of the neural tube, acting in conjunction with distinct ventralizing signals from the notochord and floor plate. Controls the cell differentiation in the neural tube in several ways: (1) promotes the differentiation of cell types that derive from the dorsal neural tube. (2) ensures that the dorsal neural tube is refractory to ventralizing species from the notochord. (3) can diffuse and influence the fate of cells in more ventral regions of the neural tube. The protein is Dorsalin-1 (DSL1) of Gallus gallus (Chicken).